A 157-amino-acid polypeptide reads, in one-letter code: Lipoprotein signal peptidase (157 aa).

Transmembrane regions (helical) follow at residues 10–30 (LVFMGGFFLIFGVDQAIKYAI), 38–58 (SLMVDIVLVFNKGVAFSLLSF), 59–79 (LEGGLKYLQILLILGLFIFLI), and 84–104 (LFKTHAIEFGMVFGAGVSNVL). Active-site residues include aspartate 114 and aspartate 131. Residues 122–142 (FDFAIFNFADVMIDVGVGVLL) traverse the membrane as a helical segment.

Belongs to the peptidase A8 family.

The protein localises to the cell inner membrane. The catalysed reaction is Release of signal peptides from bacterial membrane prolipoproteins. Hydrolyzes -Xaa-Yaa-Zaa-|-(S,diacylglyceryl)Cys-, in which Xaa is hydrophobic (preferably Leu), and Yaa (Ala or Ser) and Zaa (Gly or Ala) have small, neutral side chains.. The protein operates within protein modification; lipoprotein biosynthesis (signal peptide cleavage). This protein specifically catalyzes the removal of signal peptides from prolipoproteins. The protein is Lipoprotein signal peptidase of Helicobacter pylori (strain HPAG1).